The sequence spans 204 residues: ATP phosphoribosyltransferase (204 aa).

It belongs to the ATP phosphoribosyltransferase family. Short subfamily. Heteromultimer composed of HisG and HisZ subunits.

The protein resides in the cytoplasm. It carries out the reaction 1-(5-phospho-beta-D-ribosyl)-ATP + diphosphate = 5-phospho-alpha-D-ribose 1-diphosphate + ATP. It participates in amino-acid biosynthesis; L-histidine biosynthesis; L-histidine from 5-phospho-alpha-D-ribose 1-diphosphate: step 1/9. In terms of biological role, catalyzes the condensation of ATP and 5-phosphoribose 1-diphosphate to form N'-(5'-phosphoribosyl)-ATP (PR-ATP). Has a crucial role in the pathway because the rate of histidine biosynthesis seems to be controlled primarily by regulation of HisG enzymatic activity. The protein is ATP phosphoribosyltransferase of Hydrogenobaculum sp. (strain Y04AAS1).